The primary structure comprises 253 residues: MSEKPKVYQGVRVKMTVKELLQQRRAHQATSGANLSGSSGLHLPDTTMPSSAGLYFEPEPTSSTPSYFQTREFSTCVSCEEIPSCLDQIFESYLQTDTLPEPLLNSAQIAPHYFPESCQVAPFCHNQSLIPGSPSDSSSLSGSFDCSYSPTQLPSYTPENYSSPPSLDSLHSSLPEEGYFCQHWPSHPQYNHSSPATPSSVCYYASCEAEHLDALRTTEFFSYSGMDCADFAPPVATTGDFYKRETSCDACYS.

One can recognise an OCA domain in the interval 5–27; sequence PKVYQGVRVKMTVKELLQQRRAH.

It belongs to the POU2AF family. In terms of assembly, interacts with POU2F3 in a DNA-dependent manner; this interaction increases POU2F3 transactivation activity. In terms of tissue distribution, expressed in tuft cells.

The protein localises to the cytoplasm. It is found in the nucleus. Transcriptional coactivator that specifically associates with POU2F3. This complex drives the development of tuft cells, a rare a rare chemosensory cells that coordinate immune and neural functions within mucosal epithelial tissues. In Mus musculus (Mouse), this protein is POU Class 2 homeobox-associating factor 3.